Here is a 295-residue protein sequence, read N- to C-terminus: RNA polymerase sigma-C factor (295 aa).

Residues 73 to 86 carry the Polymerase core binding motif; that stretch reads DLIQEANIGLMKAV. The H-T-H motif DNA-binding region spans 250–269; sequence LSELGEHFGFSRERARQLEI.

It belongs to the sigma-70 factor family.

In terms of biological role, sigma factors are initiation factors that promote the attachment of RNA polymerase to specific initiation sites and are then released. This sigma factor is essential for normal fruiting body formation. The chain is RNA polymerase sigma-C factor (sigC) from Myxococcus xanthus.